The sequence spans 711 residues: Amino-acid racemase (711 aa).

Residues 1-14 (MTKNESYSGIDYFR) lie on the Cytoplasmic side of the membrane. Residues 15–35 (FIAALLIVAIHTSPLFSFSET) traverse the membrane as a helical segment. Residues 36–37 (GN) lie on the Extracellular side of the membrane. A helical membrane pass occupies residues 38 to 58 (FIFTRIVAPVAVPFFFMTSGF). Topologically, residues 59–78 (FLISRYTCNAEKLGAFIKKT) are cytoplasmic. The chain crosses the membrane as a helical span at residues 79–99 (TLIYGVAILLYIPINVYNGYF). Residues 100–117 (KMDNLLPNIIKDIVFDGT) lie on the Extracellular side of the membrane. Residues 118-138 (LYHLWYLPASIIGAAIAWYLV) form a helical membrane-spanning segment. The Cytoplasmic portion of the chain corresponds to 139-146 (KKVHYRKA). The helical transmembrane segment at 147 to 167 (FLIASILYIIGLFGDSYYGIV) threads the bilayer. Residues 168–188 (KSVSCLNVFYNLIFQLTDYTR) lie on the Extracellular side of the membrane. Residues 189–209 (NGIFFAPIFFVLGGYISDSPN) form a helical membrane-spanning segment. At 210-241 (RYRKKNYIRIYSLFCLMFGKTLTLQHFDIQKH) the chain is on the cytoplasmic side. Residues 242-262 (DSMYVLLLPSVWCLFNLLLHF) form a helical membrane-spanning segment. The Extracellular segment spans residues 263–306 (RGKRRTGLRTISLDQLYHSSVYDCCNTIVCAELLHLQSLLVENS). The chain crosses the membrane as a helical span at residues 307-327 (LVHYIAVCFASVVLAVVITAL). The Cytoplasmic portion of the chain corresponds to 328–711 (LSSLKPKKAK…EHRLNIIRRA (384 aa)). The tract at residues 336–711 (AKHTADTDRA…EHRLNIIRRA (376 aa)) is racemase. Residue lysine 376 is the Proton acceptor of the active site. N6-(pyridoxal phosphate)lysine is present on lysine 376. Substrate is bound at residue arginine 470. The active-site Proton acceptor is tyrosine 602. A substrate-binding site is contributed by methionine 651.

The protein in the N-terminal section; belongs to the acyltransferase 3 family. It in the C-terminal section; belongs to the alanine racemase family. Pyridoxal 5'-phosphate serves as cofactor.

It localises to the cell membrane. The chain is Amino-acid racemase (vanTG) from Enterococcus faecalis (Streptococcus faecalis).